Consider the following 22-residue polypeptide: Zinc finger protein 326 (22 aa).

Residues 1–22 (QGYGFNEPEQTRNQGGSSWEAP) form a disordered region. Polar residues predominate over residues 11-22 (TRNQGGSSWEAP).

The protein belongs to the AKAP95 family.

The protein localises to the nucleus matrix. Its function is as follows. Probable transcriptional activator which may play a role in neuronal differentiation. Able to bind DNA and activate expression in vitro. The sequence is that of Zinc finger protein 326 (Znf326) from Rattus norvegicus (Rat).